Here is a 338-residue protein sequence, read N- to C-terminus: Ketol-acid reductoisomerase (NADP(+)) (338 aa).

Residues 1-181 (MNVFYDKDAD…GGGRAGIIET (181 aa)) form the KARI N-terminal Rossmann domain. Residues 24–27 (YGSQ), R47, and S52 contribute to the NADP(+) site. H107 is a catalytic residue. Residue G133 participates in NADP(+) binding. Positions 182 to 327 (NFREETETDL…AKLRAMMPWI (146 aa)) constitute a KARI C-terminal knotted domain. Mg(2+)-binding residues include D190, E194, E226, and E230. Position 251 (S251) interacts with substrate.

This sequence belongs to the ketol-acid reductoisomerase family. Mg(2+) is required as a cofactor.

It carries out the reaction (2R)-2,3-dihydroxy-3-methylbutanoate + NADP(+) = (2S)-2-acetolactate + NADPH + H(+). It catalyses the reaction (2R,3R)-2,3-dihydroxy-3-methylpentanoate + NADP(+) = (S)-2-ethyl-2-hydroxy-3-oxobutanoate + NADPH + H(+). The protein operates within amino-acid biosynthesis; L-isoleucine biosynthesis; L-isoleucine from 2-oxobutanoate: step 2/4. It participates in amino-acid biosynthesis; L-valine biosynthesis; L-valine from pyruvate: step 2/4. Functionally, involved in the biosynthesis of branched-chain amino acids (BCAA). Catalyzes an alkyl-migration followed by a ketol-acid reduction of (S)-2-acetolactate (S2AL) to yield (R)-2,3-dihydroxy-isovalerate. In the isomerase reaction, S2AL is rearranged via a Mg-dependent methyl migration to produce 3-hydroxy-3-methyl-2-ketobutyrate (HMKB). In the reductase reaction, this 2-ketoacid undergoes a metal-dependent reduction by NADPH to yield (R)-2,3-dihydroxy-isovalerate. This is Ketol-acid reductoisomerase (NADP(+)) from Burkholderia ambifaria (strain MC40-6).